Reading from the N-terminus, the 309-residue chain is tRNA dimethylallyltransferase 1 (309 aa).

Residue 14-21 (GPTASGKS) coordinates ATP. Position 16 to 21 (16 to 21 (TASGKS)) interacts with substrate. Positions 39 to 42 (DSMQ) are interaction with substrate tRNA.

It belongs to the IPP transferase family. In terms of assembly, monomer. It depends on Mg(2+) as a cofactor.

The enzyme catalyses adenosine(37) in tRNA + dimethylallyl diphosphate = N(6)-dimethylallyladenosine(37) in tRNA + diphosphate. Its function is as follows. Catalyzes the transfer of a dimethylallyl group onto the adenine at position 37 in tRNAs that read codons beginning with uridine, leading to the formation of N6-(dimethylallyl)adenosine (i(6)A). The polypeptide is tRNA dimethylallyltransferase 1 (Pelobacter propionicus (strain DSM 2379 / NBRC 103807 / OttBd1)).